We begin with the raw amino-acid sequence, 607 residues long: (R)-limonene synthase 1, chloroplastic (607 aa).

Residues 1 to 52 (MSSCINPSTLATSVNGFKCLPLATNRAAIRIMAKNKPVQCLVSTKYDNLTVD) constitute a chloroplast transit peptide. Mn(2+)-binding residues include Asp-343 and Asp-347. The substrate site is built by Asp-343, Asp-347, Arg-485, Asp-488, and Lys-504. The DDXXD motif motif lies at 343–347 (DDIYD). Asp-488 contributes to the Mn(2+) binding site.

Belongs to the terpene synthase family. Requires Mg(2+) as cofactor. It depends on Mn(2+) as a cofactor.

Its subcellular location is the plastid. It is found in the chloroplast. The enzyme catalyses (2E)-geranyl diphosphate = (4R)-limonene + diphosphate. With respect to regulation, inhibited by 2-fluorogeranyl diphosphate (FGPP) and 2-fluoroneryl diphosphate (FNPP). Catalyzes the conversion of geranyl diphosphate to (+)-(4R)-limonene. Produces exclusively the (+)-enantiomer. Can use neryl diphosphate as substrate. Has no activity with farnesyl diphosphate. The sequence is that of (R)-limonene synthase 1, chloroplastic from Citrus sinensis (Sweet orange).